The chain runs to 113 residues: Large ribosomal subunit protein eL31B (113 aa).

It belongs to the eukaryotic ribosomal protein eL31 family. Component of the large ribosomal subunit (LSU). Mature yeast ribosomes consist of a small (40S) and a large (60S) subunit. The 40S small subunit contains 1 molecule of ribosomal RNA (18S rRNA) and 33 different proteins (encoded by 57 genes). The large 60S subunit contains 3 rRNA molecules (25S, 5.8S and 5S rRNA) and 46 different proteins (encoded by 81 genes).

It localises to the cytoplasm. In terms of biological role, component of the ribosome, a large ribonucleoprotein complex responsible for the synthesis of proteins in the cell. The small ribosomal subunit (SSU) binds messenger RNAs (mRNAs) and translates the encoded message by selecting cognate aminoacyl-transfer RNA (tRNA) molecules. The large subunit (LSU) contains the ribosomal catalytic site termed the peptidyl transferase center (PTC), which catalyzes the formation of peptide bonds, thereby polymerizing the amino acids delivered by tRNAs into a polypeptide chain. The nascent polypeptides leave the ribosome through a tunnel in the LSU and interact with protein factors that function in enzymatic processing, targeting, and the membrane insertion of nascent chains at the exit of the ribosomal tunnel. This is Large ribosomal subunit protein eL31B from Saccharomyces cerevisiae (strain ATCC 204508 / S288c) (Baker's yeast).